Here is a 315-residue protein sequence, read N- to C-terminus: MKSSEPAPATPTGFRNSIWFIIFYLFVIQALGSAIISGGIEFAIAYAMYHSRVDLITLWAFPHTISGDCALSLFIQVGLTWASEEILVGFDDYKRPVFRLNKWITKPSPLKTESNEEIPPPKKRFIVDYFESKDNVVAKQNTLYHKHNWLFGYLEVNRGIIPKGKEATLKGFLTSQFIHDSTQSKFMNFIEWFVQKFIRSMILAIAMFIVIWPVTMGILAGIGHKVGSHDYYFNDYPLPQVMKLIYAVVIAFVCTPVAIIVIVLRNQFHEELYYEGLANGTLQQDQEVCSTGNRSSGSTDQDISTTKQQSQEAVA.

A run of 3 helical transmembrane segments spans residues I18 to G38, I202 to I222, and L244 to L264. Positions V288 to A315 are disordered.

The protein resides in the membrane. This is an uncharacterized protein from Saccharomyces cerevisiae (strain ATCC 204508 / S288c) (Baker's yeast).